The primary structure comprises 353 residues: Endophilin-A1 (353 aa).

The segment at 1–21 (MSVAGLKKQFHKATQKVSEKV) is membrane-binding amphipathic helix. Residues 1–27 (MSVAGLKKQFHKATQKVSEKVGGAEGT) are disordered. The segment at 1–125 (MSVAGLKKQF…DVGEAMKELS (125 aa)) is binds and tubulates liposomes. The 232-residue stretch at 18–249 (SEKVGGAEGT…LEDRIKEASS (232 aa)) folds into the BAR domain. The interval 60–87 (PNPASRAKLSMINTMSKIRGQEKGPGYP) is required for dimerization upon membrane association. A coiled-coil region spans residues 181 to 201 (EELRQALEKFDESKEIAESSM). Residues 243–257 (RIKEASSQPKREYQP) are compositionally biased toward basic and acidic residues. Residues 243 to 290 (RIKEASSQPKREYQPKPRMSLDFTSGGDNTQHNGGISHATTPKPAGAH) form a disordered region. Residues 264–282 (DFTSGGDNTQHNGGISHAT) are compositionally biased toward polar residues. One can recognise an SH3 domain in the interval 291 to 350 (MDQPCCRALYDFEPENEGELGFKEGDIITLTNQIDENWYEGMLHGQSGFFPINYVDILVP).

The protein belongs to the endophilin family. In terms of assembly, monomer; in cytoplasm. Homodimer; when associated with membranes. Associates with MAP4K3. This interaction appears to regulate MAP4K3-mediated JNK activation. Interacts with SYNJ1 and DNM1. In terms of tissue distribution, highly expressed in brain.

The protein resides in the cytoplasm. The protein localises to the membrane. It localises to the early endosome. Its subcellular location is the presynapse. Its function is as follows. Implicated in synaptic vesicle endocytosis. May recruit other proteins to membranes with high curvature. This is Endophilin-A1 from Gallus gallus (Chicken).